Reading from the N-terminus, the 308-residue chain is Ribosomal RNA small subunit methyltransferase H (308 aa).

S-adenosyl-L-methionine-binding positions include 46-48, D63, Y87, D108, and Q115; that span reads AGH. The segment at 269 to 308 is disordered; that stretch reads TKRPVEASEEERGRNPRARSAKLRAAEKVAAPEGLPEVEV. Residues 271 to 282 show a composition bias toward basic and acidic residues; the sequence is RPVEASEEERGR.

The protein belongs to the methyltransferase superfamily. RsmH family.

It localises to the cytoplasm. It catalyses the reaction cytidine(1402) in 16S rRNA + S-adenosyl-L-methionine = N(4)-methylcytidine(1402) in 16S rRNA + S-adenosyl-L-homocysteine + H(+). Functionally, specifically methylates the N4 position of cytidine in position 1402 (C1402) of 16S rRNA. In Deinococcus geothermalis (strain DSM 11300 / CIP 105573 / AG-3a), this protein is Ribosomal RNA small subunit methyltransferase H.